Here is a 499-residue protein sequence, read N- to C-terminus: Ethanolamine-phosphate phospho-lyase (499 aa).

N6-(pyridoxal phosphate)lysine is present on lysine 278.

The protein belongs to the class-III pyridoxal-phosphate-dependent aminotransferase family. Homotetramer. Requires pyridoxal 5'-phosphate as cofactor.

It is found in the mitochondrion. The catalysed reaction is phosphoethanolamine + H2O = acetaldehyde + NH4(+) + phosphate. Catalyzes the pyridoxal-phosphate-dependent breakdown of phosphoethanolamine, converting it to ammonia, inorganic phosphate and acetaldehyde. The chain is Ethanolamine-phosphate phospho-lyase (Etnppl) from Mus musculus (Mouse).